Here is a 411-residue protein sequence, read N- to C-terminus: Carbohydrate sulfotransferase 1 (411 aa).

Residues 1–2 lie on the Cytoplasmic side of the membrane; that stretch reads MQ. The chain crosses the membrane as a helical; Signal-anchor for type II membrane protein span at residues 3–23; that stretch reads CSWKAVLLLALASIAIQYTAI. Topologically, residues 24 to 411 are lumenal; sequence RTFTAKSFHT…VEERDFRPFS (388 aa). N-linked (GlcNAc...) asparagine glycosylation occurs at asparagine 56. 69–75 serves as a coordination point for 3'-phosphoadenylyl sulfate; sequence TRSGSSF. Asparagine 145 and asparagine 189 each carry an N-linked (GlcNAc...) asparagine glycan. 3'-phosphoadenylyl sulfate is bound at residue 234-242; it reads RDPRGILAS. Asparagine 334 carries an N-linked (GlcNAc...) asparagine glycan. The Cell attachment site motif lies at 337–339; it reads RGD.

This sequence belongs to the sulfotransferase 1 family. Gal/GlcNAc/GalNAc subfamily. As to expression, widely expressed at low level. Expressed in brain and skeletal muscle. Expressed by high endothelial cells (HEVs) and leukocytes.

It localises to the golgi apparatus membrane. The catalysed reaction is 3'-phosphoadenylyl sulfate + keratan = adenosine 3',5'-bisphosphate + keratan 6'-sulfate.. Its pathway is glycan metabolism. Functionally, sulfotransferase that utilizes 3'-phospho-5'-adenylyl sulfate (PAPS) as sulfonate donor to catalyze the transfer of sulfate to position 6 of internal galactose (Gal) residues of keratan. Cooperates with B4GALT4 and B3GNT7 glycosyltransferases and CHST6 sulfotransferase to construct and elongate disulfated disaccharide unit [-&gt;3(6-sulfoGalbeta)1-&gt;4(6-sulfoGlcNAcbeta)1-&gt;] within keratan sulfate polymer. Has a preference for sulfating keratan sulfate, but it also transfers sulfate to the unsulfated polymer. Involved in biosynthesis of phosphacan, a major keratan sulfate proteoglycan in the developing brain. Involved in biosynthesis of 6-sulfoGalbeta-containing O-linked glycans in high endothelial venules of lymph nodes. May act in a synergistic manner with CHST4 to generate sialyl 6',6-disulfo Lewis X motif, a recognition determinant for immune cell receptors implicated in leukocyte trafficking. Catalyzes sulfation of N-acetyllactosamine (LacNAc) oligosaccharides with highest efficiency for sialylated LacNAc structures. The sequence is that of Carbohydrate sulfotransferase 1 from Homo sapiens (Human).